The primary structure comprises 315 residues: 4-hydroxy-3-methylbut-2-enyl diphosphate reductase (315 aa).

Cys-12 contributes to the [4Fe-4S] cluster binding site. (2E)-4-hydroxy-3-methylbut-2-enyl diphosphate-binding residues include His-41 and His-74. Positions 41 and 74 each coordinate dimethylallyl diphosphate. The isopentenyl diphosphate site is built by His-41 and His-74. Residue Cys-96 participates in [4Fe-4S] cluster binding. Residue His-124 participates in (2E)-4-hydroxy-3-methylbut-2-enyl diphosphate binding. Residue His-124 participates in dimethylallyl diphosphate binding. His-124 contacts isopentenyl diphosphate. Glu-126 serves as the catalytic Proton donor. Thr-167 is a binding site for (2E)-4-hydroxy-3-methylbut-2-enyl diphosphate. Cys-197 is a binding site for [4Fe-4S] cluster. (2E)-4-hydroxy-3-methylbut-2-enyl diphosphate-binding residues include Ser-225, Ser-226, Asn-227, and Ser-269. Dimethylallyl diphosphate contacts are provided by Ser-225, Ser-226, Asn-227, and Ser-269. Positions 225, 226, 227, and 269 each coordinate isopentenyl diphosphate.

It belongs to the IspH family. In terms of assembly, homodimer. Requires [4Fe-4S] cluster as cofactor.

The catalysed reaction is isopentenyl diphosphate + 2 oxidized [2Fe-2S]-[ferredoxin] + H2O = (2E)-4-hydroxy-3-methylbut-2-enyl diphosphate + 2 reduced [2Fe-2S]-[ferredoxin] + 2 H(+). It carries out the reaction dimethylallyl diphosphate + 2 oxidized [2Fe-2S]-[ferredoxin] + H2O = (2E)-4-hydroxy-3-methylbut-2-enyl diphosphate + 2 reduced [2Fe-2S]-[ferredoxin] + 2 H(+). It functions in the pathway isoprenoid biosynthesis; dimethylallyl diphosphate biosynthesis; dimethylallyl diphosphate from (2E)-4-hydroxy-3-methylbutenyl diphosphate: step 1/1. The protein operates within isoprenoid biosynthesis; isopentenyl diphosphate biosynthesis via DXP pathway; isopentenyl diphosphate from 1-deoxy-D-xylulose 5-phosphate: step 6/6. Its function is as follows. Catalyzes the conversion of 1-hydroxy-2-methyl-2-(E)-butenyl 4-diphosphate (HMBPP) into a mixture of isopentenyl diphosphate (IPP) and dimethylallyl diphosphate (DMAPP). Acts in the terminal step of the DOXP/MEP pathway for isoprenoid precursor biosynthesis. The chain is 4-hydroxy-3-methylbut-2-enyl diphosphate reductase from Wigglesworthia glossinidia brevipalpis.